Consider the following 224-residue polypeptide: UPF0758 protein mma_2551 (224 aa).

The MPN domain maps to 102 to 224 (SLNSPQAVKK…VYSFAEHGHL (123 aa)). Positions 173, 175, and 186 each coordinate Zn(2+). Positions 173–186 (HNHPSGSSEPSAAD) match the JAMM motif motif.

This sequence belongs to the UPF0758 family.

The chain is UPF0758 protein mma_2551 from Janthinobacterium sp. (strain Marseille) (Minibacterium massiliensis).